A 302-amino-acid chain; its full sequence is Cyclopropane mycolic acid synthase 2 (302 aa).

S-adenosyl-L-methionine contacts are provided by residues 41–42 (YS), 76–84 (LLDIGCGWG), 102–107 (TLSENQ), and 131–132 (WE). Cys-284 is a catalytic residue.

It belongs to the CFA/CMAS family. As to quaternary structure, homodimer.

It is found in the cytoplasm. It catalyses the reaction a 1-acyl-2-(9Z)-enoyl-sn-glycero-3-phospholipid + S-adenosyl-L-methionine = a 1-acyl-2-(9-cyclopronane)-acyl-sn-glycero-3-phospholipid + S-adenosyl-L-homocysteine + H(+). Its pathway is lipid metabolism; mycolic acid biosynthesis. Functionally, catalyzes the formation of trans cyclopropanated ketomycolate or methoxymycolate through the conversion of a double bond to a cyclopropane ring at the proximal position of an oxygenated mycolic acid via the transfer of a methylene group from S-adenosyl-L-methionine. In the absence of MmaA2, CmaA2 has a non-specific cis-cyclopropanating activity and is able to catalyze the conversion of a double bond to a cis cyclopropane ring at the distal position of an alpha mycolic acid. Cyclopropanated mycolic acids are key factors participating in cell envelope permeability, host immunomodulation and persistence. In Mycobacterium bovis (strain ATCC BAA-935 / AF2122/97), this protein is Cyclopropane mycolic acid synthase 2 (cmaA2).